The following is a 151-amino-acid chain: Neuroglobin (151 aa).

The Globin domain maps to 1–149 (MERPEQELIR…VVQAMSRGWD (149 aa)). 2 residues coordinate heme b: His64 and His96.

The protein belongs to the globin family. As to quaternary structure, monomer. Homodimer and homotetramer; disulfide-linked. Mainly monomeric but also detected as part of homodimers and homotetramers. Interacts with 14-3-3 proteins; regulates the phosphorylation of NGB. Could interact (ferrous form) with G-alpha(i) proteins (GTP-bound form). In terms of processing, phosphorylated during hypoxia by ERK1/ERK2. Phosphorylation regulates the heme pocket hexacoordination preventing the association of His-64 with the heme metal center. Thereby, promotes the access of dioxygen and nitrite to the heme and stimulates the nitrite reductase activity. Phosphorylation during hypoxia is stabilized by 14-3-3 proteins.

The protein resides in the cytoplasm. The protein localises to the cytosol. It localises to the mitochondrion matrix. It catalyses the reaction Fe(III)-heme b-[protein] + nitric oxide + H2O = Fe(II)-heme b-[protein] + nitrite + 2 H(+). Monomeric globin with a bis-histidyl six-coordinate heme-iron atom through which it can bind dioxygen, carbon monoxide and nitric oxide. Could help transport oxygen and increase its availability to the metabolically active neuronal tissues, though its low quantity in tissues as well as its high affinity for dioxygen, which may limit its oxygen-releasing ability, argue against it. The ferrous/deoxygenated form exhibits a nitrite reductase activity and it could produce nitric oxide which in turn inhibits cellular respiration in response to hypoxia. In its ferrous/deoxygenated state, it may also exhibit GDI (Guanine nucleotide Dissociation Inhibitor) activity toward heterotrimeric G-alpha proteins, thereby regulating signal transduction to facilitate neuroprotective responses in the wake of hypoxia and associated oxidative stress. The polypeptide is Neuroglobin (Oryctolagus cuniculus (Rabbit)).